The chain runs to 342 residues: Holliday junction branch migration complex subunit RuvB (342 aa).

Residues 1–184 form a large ATPase domain (RuvB-L) region; sequence MEENFDIREQ…FGINLHLEYY (184 aa). ATP is bound by residues Leu23, Arg24, Gly65, Lys68, Thr69, Thr70, 131–133, Arg174, Tyr184, and Arg221; that span reads EDY. Thr69 serves as a coordination point for Mg(2+). Positions 185–255 are small ATPAse domain (RuvB-S); it reads DDDVLTSIIR…IARFALEALN (71 aa). Positions 258-342 are head domain (RuvB-H); it reads RYGLDEIDNK…YNSQKTLFDD (85 aa). DNA contacts are provided by Arg313 and Arg318.

It belongs to the RuvB family. As to quaternary structure, homohexamer. Forms an RuvA(8)-RuvB(12)-Holliday junction (HJ) complex. HJ DNA is sandwiched between 2 RuvA tetramers; dsDNA enters through RuvA and exits via RuvB. An RuvB hexamer assembles on each DNA strand where it exits the tetramer. Each RuvB hexamer is contacted by two RuvA subunits (via domain III) on 2 adjacent RuvB subunits; this complex drives branch migration. In the full resolvosome a probable DNA-RuvA(4)-RuvB(12)-RuvC(2) complex forms which resolves the HJ.

It is found in the cytoplasm. The catalysed reaction is ATP + H2O = ADP + phosphate + H(+). Functionally, the RuvA-RuvB-RuvC complex processes Holliday junction (HJ) DNA during genetic recombination and DNA repair, while the RuvA-RuvB complex plays an important role in the rescue of blocked DNA replication forks via replication fork reversal (RFR). RuvA specifically binds to HJ cruciform DNA, conferring on it an open structure. The RuvB hexamer acts as an ATP-dependent pump, pulling dsDNA into and through the RuvAB complex. RuvB forms 2 homohexamers on either side of HJ DNA bound by 1 or 2 RuvA tetramers; 4 subunits per hexamer contact DNA at a time. Coordinated motions by a converter formed by DNA-disengaged RuvB subunits stimulates ATP hydrolysis and nucleotide exchange. Immobilization of the converter enables RuvB to convert the ATP-contained energy into a lever motion, pulling 2 nucleotides of DNA out of the RuvA tetramer per ATP hydrolyzed, thus driving DNA branch migration. The RuvB motors rotate together with the DNA substrate, which together with the progressing nucleotide cycle form the mechanistic basis for DNA recombination by continuous HJ branch migration. Branch migration allows RuvC to scan DNA until it finds its consensus sequence, where it cleaves and resolves cruciform DNA. This chain is Holliday junction branch migration complex subunit RuvB, found in Phocaeicola vulgatus (strain ATCC 8482 / DSM 1447 / JCM 5826 / CCUG 4940 / NBRC 14291 / NCTC 11154) (Bacteroides vulgatus).